Reading from the N-terminus, the 752-residue chain is F-box and WD repeat domain containing protein 10B (752 aa).

6 WD repeats span residues 169 to 206 (GLNQDITDVCFSPEKDHSSKSATSQVYWTAKTQHTSLP), 451 to 490 (GHAGSVRALFLCEEENFLLSGSYDLSIRYWDLKSGVCTRI), 493 to 532 (GHQGTITCMDLCKNRLVSGGRDCQVKVWDVDTGKCLKTFR), 534 to 569 (KDPILATRINDTYIVSSCERGLVKVWHIAMAQLVKT), 572 to 609 (GHEGAVKCLFFDQWHLLSGSTDGLVMAWSMVGKYERCL), and 611 to 652 (AFKH…KVIK).

As to expression, expressed in pancreas, heart and skeletal muscle.

This chain is F-box and WD repeat domain containing protein 10B, found in Homo sapiens (Human).